The following is a 337-amino-acid chain: Lipoate-protein ligase A (337 aa).

A BPL/LPL catalytic domain is found at 29 to 216; sequence DQNQTILFLW…AFFNYYQTTV (188 aa). ATP is bound by residues arginine 71, 76–79, and lysine 134; that span reads GAVF. Lysine 134 serves as a coordination point for (R)-lipoate.

It belongs to the LplA family. Monomer.

It localises to the cytoplasm. The catalysed reaction is L-lysyl-[lipoyl-carrier protein] + (R)-lipoate + ATP = N(6)-[(R)-lipoyl]-L-lysyl-[lipoyl-carrier protein] + AMP + diphosphate + H(+). It participates in protein modification; protein lipoylation via exogenous pathway; protein N(6)-(lipoyl)lysine from lipoate: step 1/2. Its pathway is protein modification; protein lipoylation via exogenous pathway; protein N(6)-(lipoyl)lysine from lipoate: step 2/2. Functionally, catalyzes both the ATP-dependent activation of exogenously supplied lipoate to lipoyl-AMP and the transfer of the activated lipoyl onto the lipoyl domains of lipoate-dependent enzymes. The protein is Lipoate-protein ligase A of Blochmanniella floridana.